The sequence spans 389 residues: MMSSPAKAAKLALEDGTVYTGTSLGAEGETTGEVVFNTSMTGYQEILTDPSYRGQLVTMTYPEMGNYGINSIDLENRGTSLAGFIIRNESRMHSNYRSEGSLSDYLNSQGVVGIAGIDTRALVRRIRSEGAMRGVLSTTDLDDASLVAKAKASPGLVGRDLVQEVMPTQLEKWTNELDDWTIREIREAAKDASIGDDSRPHVVCMDFGMKWNIPRHLRSRGNRVTIVPGNASADDILKMDPDGVFLSNGPGDPEPLTYAHKAIGELLGQVPVFGICLGHQLLSVACGAKTFKLKFGHRGANQPVLDLETGKVEITSQNHGFAVDDQGLPDCLEVTHRNLNDDTIAGVRHKDTGAFAVQYHPEAAAGPHDSHYLFSRFQEQLNEKCGVTA.

The CPSase stretch occupies residues 1-197 (MMSSPAKAAK…AAKDASIGDD (197 aa)). 3 residues coordinate L-glutamine: S51, G249, and G251. Residues 201–387 (HVVCMDFGMK…QEQLNEKCGV (187 aa)) enclose the Glutamine amidotransferase type-1 domain. The Nucleophile role is filled by C276. L-glutamine is bound by residues L277, Q280, N318, G320, and F321. Catalysis depends on residues H360 and E362.

The protein belongs to the CarA family. Composed of two chains; the small (or glutamine) chain promotes the hydrolysis of glutamine to ammonia, which is used by the large (or ammonia) chain to synthesize carbamoyl phosphate. Tetramer of heterodimers (alpha,beta)4.

It carries out the reaction hydrogencarbonate + L-glutamine + 2 ATP + H2O = carbamoyl phosphate + L-glutamate + 2 ADP + phosphate + 2 H(+). The enzyme catalyses L-glutamine + H2O = L-glutamate + NH4(+). The protein operates within amino-acid biosynthesis; L-arginine biosynthesis; carbamoyl phosphate from bicarbonate: step 1/1. It functions in the pathway pyrimidine metabolism; UMP biosynthesis via de novo pathway; (S)-dihydroorotate from bicarbonate: step 1/3. Functionally, small subunit of the glutamine-dependent carbamoyl phosphate synthetase (CPSase). CPSase catalyzes the formation of carbamoyl phosphate from the ammonia moiety of glutamine, carbonate, and phosphate donated by ATP, constituting the first step of 2 biosynthetic pathways, one leading to arginine and/or urea and the other to pyrimidine nucleotides. The small subunit (glutamine amidotransferase) binds and cleaves glutamine to supply the large subunit with the substrate ammonia. The protein is Carbamoyl phosphate synthase small chain of Rhodopirellula baltica (strain DSM 10527 / NCIMB 13988 / SH1).